The sequence spans 326 residues: MEEPNAAPLPSRLARLLSALFYGTCSFLIVLVNKALLTTYGFPSPIVLGIGQMATTIMILYVFKLNKIIHFPDFDKKIPGKLFPLPLLYVGNHISGLSSTSKLSLPMFTVLRKFTIPFTLLLEAIILGTQYSLNIILSVLAIVLGAFIAAGSDLTFNLEGYVFVFLNDIFTAANGVYTKQKMDPKELGKYGVLFYNACFMLIPTVIISVSTGDFQQATEFRHWKNVLFIIQFLLSCLLGFLLMYSTALCSYYNSALTTAVVGAIKNVSVAYIGMLVGGDYIFSLLNFIGLNICMAGGLRYSFLTLSSQLKPKQPVDEESIPLDLKS.

The Extracellular portion of the chain corresponds to methionine 1–arginine 15. A helical membrane pass occupies residues leucine 16–leucine 36. The Cytoplasmic segment spans residues leucine 37–glycine 41. Residues phenylalanine 42–valine 62 form a helical membrane-spanning segment. At phenylalanine 63 to glutamine 130 the chain is on the extracellular side. Residues tyrosine 131–glycine 151 traverse the membrane as a helical segment. Topologically, residues serine 152–threonine 155 are cytoplasmic. Residues phenylalanine 156–valine 176 form a helical membrane-spanning segment. Topologically, residues tyrosine 177–lysine 189 are extracellular. The chain crosses the membrane as a helical span at residues tyrosine 190 to serine 210. Residues threonine 211–asparagine 225 are Cytoplasmic-facing. A helical membrane pass occupies residues valine 226–threonine 246. The Extracellular portion of the chain corresponds to alanine 247–asparagine 253. A helical transmembrane segment spans residues serine 254–valine 276. Over glycine 277–tyrosine 280 the chain is Cytoplasmic. A helical membrane pass occupies residues isoleucine 281–leucine 303. Residues threonine 304–serine 326 lie on the Extracellular side of the membrane.

The protein belongs to the TPT transporter family. SLC35D subfamily.

The protein localises to the golgi apparatus membrane. The enzyme catalyses UMP(out) + UDP-N-acetyl-alpha-D-glucosamine(in) = UMP(in) + UDP-N-acetyl-alpha-D-glucosamine(out). It catalyses the reaction UMP(out) + UDP-alpha-D-glucose(in) = UMP(in) + UDP-alpha-D-glucose(out). Functionally, nucleotide sugar antiporter transporting UDP-N-acetylglucosamine (UDP-GlcNAc) and UDP-glucose (UDP-Glc) from the cytosol into the lumen of the Golgi in exchange of UMP. By supplying UDP-N-acetylglucosamine, a donor substrate to heparan sulfate synthases, probably takes part in the synthesis of these glycoconjugates. In Mus musculus (Mouse), this protein is Nucleotide sugar transporter SLC35D2.